Here is a 259-residue protein sequence, read N- to C-terminus: Ribosomal RNA small subunit methyltransferase A (259 aa).

Residues N13, T15, G40, E61, D85, and N105 each coordinate S-adenosyl-L-methionine.

This sequence belongs to the class I-like SAM-binding methyltransferase superfamily. rRNA adenine N(6)-methyltransferase family. RsmA subfamily.

It localises to the cytoplasm. It carries out the reaction adenosine(1518)/adenosine(1519) in 16S rRNA + 4 S-adenosyl-L-methionine = N(6)-dimethyladenosine(1518)/N(6)-dimethyladenosine(1519) in 16S rRNA + 4 S-adenosyl-L-homocysteine + 4 H(+). Specifically dimethylates two adjacent adenosines (A1518 and A1519) in the loop of a conserved hairpin near the 3'-end of 16S rRNA in the 30S particle. May play a critical role in biogenesis of 30S subunits. The protein is Ribosomal RNA small subunit methyltransferase A of Mycoplasma genitalium (strain ATCC 33530 / DSM 19775 / NCTC 10195 / G37) (Mycoplasmoides genitalium).